The primary structure comprises 159 residues: Ribosomal RNA large subunit methyltransferase H (159 aa).

S-adenosyl-L-methionine-binding positions include leucine 76, glycine 108, and leucine 127–phenylalanine 132.

This sequence belongs to the RNA methyltransferase RlmH family. In terms of assembly, homodimer.

The protein resides in the cytoplasm. It carries out the reaction pseudouridine(1915) in 23S rRNA + S-adenosyl-L-methionine = N(3)-methylpseudouridine(1915) in 23S rRNA + S-adenosyl-L-homocysteine + H(+). Functionally, specifically methylates the pseudouridine at position 1915 (m3Psi1915) in 23S rRNA. The sequence is that of Ribosomal RNA large subunit methyltransferase H from Syntrophomonas wolfei subsp. wolfei (strain DSM 2245B / Goettingen).